Consider the following 278-residue polypeptide: Orotidine 5'-phosphate decarboxylase (278 aa).

Catalysis depends on Lys95, which acts as the Proton donor.

Belongs to the OMP decarboxylase family. Type 2 subfamily.

It catalyses the reaction orotidine 5'-phosphate + H(+) = UMP + CO2. It functions in the pathway pyrimidine metabolism; UMP biosynthesis via de novo pathway; UMP from orotate: step 2/2. The sequence is that of Orotidine 5'-phosphate decarboxylase from Methylibium petroleiphilum (strain ATCC BAA-1232 / LMG 22953 / PM1).